A 460-amino-acid chain; its full sequence is A-type ATP synthase subunit B (460 aa).

This sequence belongs to the ATPase alpha/beta chains family. Has multiple subunits with at least A(3), B(3), C, D, E, F, H, I and proteolipid K(x).

It localises to the cell membrane. Its function is as follows. Component of the A-type ATP synthase that produces ATP from ADP in the presence of a proton gradient across the membrane. The B chain is a regulatory subunit. The chain is A-type ATP synthase subunit B from Methanosarcina barkeri (strain Fusaro / DSM 804).